Here is a 360-residue protein sequence, read N- to C-terminus: Protein RecA (360 aa).

Gly-65–Thr-72 serves as a coordination point for ATP.

It belongs to the RecA family.

Its subcellular location is the cytoplasm. Its function is as follows. Can catalyze the hydrolysis of ATP in the presence of single-stranded DNA, the ATP-dependent uptake of single-stranded DNA by duplex DNA, and the ATP-dependent hybridization of homologous single-stranded DNAs. It interacts with LexA causing its activation and leading to its autocatalytic cleavage. The sequence is that of Protein RecA from Tolumonas auensis (strain DSM 9187 / NBRC 110442 / TA 4).